The following is a 1042-amino-acid chain: Sarcoplasmic/endoplasmic reticulum calcium ATPase 2 (1042 aa).

Topologically, residues methionine 1–threonine 48 are cytoplasmic. Serine 38 is subject to Phosphoserine. Residues leucine 49 to alanine 69 form a helical membrane-spanning segment. Over cysteine 70–valine 89 the chain is Lumenal. The chain crosses the membrane as a helical span at residues glutamate 90–arginine 110. The Cytoplasmic portion of the chain corresponds to asparagine 111–leucine 253. Residues aspartate 254–isoleucine 273 traverse the membrane as a helical segment. Residues isoleucine 274–tyrosine 295 lie on the Lumenal side of the membrane. 3'-nitrotyrosine occurs at positions 294 and 295. Residues phenylalanine 296–alanine 313 form a helical membrane-spanning segment. Ca(2+) contacts are provided by valine 304, alanine 305, isoleucine 307, and glutamate 309. Over valine 314–methionine 756 the chain is Cytoplasmic. Residue aspartate 351 is the 4-aspartylphosphate intermediate of the active site. Residues aspartate 351 and threonine 353 each contribute to the Mg(2+) site. Residue threonine 353 coordinates ATP. A Phosphothreonine modification is found at threonine 441. ATP-binding residues include glutamate 442, arginine 489, and lysine 514. Serine 531 carries the phosphoserine modification. Arginine 559 serves as a coordination point for ATP. The segment at methionine 575 to glycine 594 is interaction with HAX1. Phosphoserine is present on serine 580. ATP contacts are provided by threonine 624, glycine 625, and aspartate 626. The residue at position 663 (serine 663) is a Phosphoserine. ATP is bound by residues arginine 677 and lysine 683. A Mg(2+)-binding site is contributed by aspartate 702. Asparagine 705 is an ATP binding site. A helical membrane pass occupies residues lysine 757 to leucine 776. 2 residues coordinate Ca(2+): asparagine 767 and glutamate 770. The Lumenal portion of the chain corresponds to threonine 777–leucine 786. Residues isoleucine 787 to glycine 807 traverse the membrane as a helical segment. An interaction with PLN region spans residues isoleucine 787–glycine 807. The interval proline 788–serine 1042 is interaction with TMEM64 and PDIA3. Residues asparagine 795, threonine 798, and aspartate 799 each contribute to the Ca(2+) site. Over phenylalanine 808–leucine 827 the chain is Cytoplasmic. The helical transmembrane segment at isoleucine 828–alanine 850 threads the bilayer. Residues alanine 851–methionine 896 lie on the Lumenal side of the membrane. A disulfide bridge connects residues cysteine 875 and cysteine 887. Residues threonine 897 to serine 916 form a helical membrane-spanning segment. Glutamate 907 is a Ca(2+) binding site. At glutamate 917 to asparagine 929 the chain is on the cytoplasmic side. The helical transmembrane segment at isoleucine 930–tyrosine 948 threads the bilayer. Residues tryptophan 931–leucine 942 are interaction with PLN. Over valine 949–valine 963 the chain is Lumenal. The helical transmembrane segment at threonine 964–lysine 984 threads the bilayer. Residues phenylalanine 985 to serine 1042 lie on the Cytoplasmic side of the membrane.

This sequence belongs to the cation transport ATPase (P-type) (TC 3.A.3) family. Type IIA subfamily. In terms of assembly, interacts with sarcolipin (SLN); the interaction inhibits ATP2A2 Ca(2+) affinity. Interacts with phospholamban (PLN); the interaction inhibits ATP2A2 Ca(2+) affinity. Interacts with myoregulin (MRLN). Interacts with ARLN and ERLN; the interactions inhibit ATP2A2 Ca(2+) affinity. Interacts with SRTIT1/DWORF; the interaction results in activation of ATP2A2. Interacts with the monomeric forms of SLN, PLN, ARLN, ERLN and STRI1/DWORF. Interacts with HAX1. Interacts with S100A8 and S100A9. Interacts with SLC35G1 and STIM1. Interacts with TMEM203. Interacts with TMEM64 and PDIA3. Interacts with TMX1. Interacts with TMX2. Interacts with VMP1; VMP1 competes with PLN and SLN to prevent them from forming an inhibitory complex with ATP2A2. Interacts with ULK1. Interacts with TUNAR. Interacts with FLVCR2; this interaction occurs in the absence of heme and promotes ATP2A2 proteasomal degradation; this complex is dissociated upon heme binding. Interacts with FNIP1. Interacts with TRAM2 (via C-terminus). The cofactor is Mg(2+). Post-translationally, nitrated under oxidative stress. Nitration on the two tyrosine residues inhibits catalytic activity. In terms of processing, serotonylated on Gln residues by TGM2 in response to hypoxia, leading to its inactivation. In terms of tissue distribution, isoform 2 is highly expressed in heart and slow twitch skeletal muscle. Isoform 1 is widely expressed.

It is found in the endoplasmic reticulum membrane. Its subcellular location is the sarcoplasmic reticulum membrane. It catalyses the reaction Ca(2+)(in) + ATP + H2O = Ca(2+)(out) + ADP + phosphate + H(+). Has different conformational states with differential Ca2+ affinity. The E1 conformational state (active form) shows high Ca(2+) affinity, while the E2 state exhibits low Ca(2+) affinity. Binding of ATP allosterically increases its affinity for subsequent binding of Ca2+. Reversibly inhibited by phospholamban (PLN) at low calcium concentrations. PLN inhibits ATP2A2 Ca(2+) affinity by disrupting its allosteric activation by ATP. Inhibited by sarcolipin (SLN) and myoregulin (MRLN). The inhibition is blocked by VMP1. Enhanced by STRIT1/DWORF; STRIT1 increases activity by displacing sarcolipin (SLN), phospholamban (PLN) and myoregulin (MRLN). Stabilizes SERCA2 in its E2 state. In terms of biological role, this magnesium-dependent enzyme catalyzes the hydrolysis of ATP coupled with the translocation of calcium from the cytosol to the sarcoplasmic reticulum lumen. Involved in autophagy in response to starvation. Upon interaction with VMP1 and activation, controls ER-isolation membrane contacts for autophagosome formation. Also modulates ER contacts with lipid droplets, mitochondria and endosomes. In coordination with FLVCR2 mediates heme-stimulated switching from mitochondrial ATP synthesis to thermogenesis. Its function is as follows. Involved in the regulation of the contraction/relaxation cycle. Acts as a regulator of TNFSF11-mediated Ca(2+) signaling pathways via its interaction with TMEM64 which is critical for the TNFSF11-induced CREB1 activation and mitochondrial ROS generation necessary for proper osteoclast generation. Association between TMEM64 and SERCA2 in the ER leads to cytosolic Ca(2+) spiking for activation of NFATC1 and production of mitochondrial ROS, thereby triggering Ca(2+) signaling cascades that promote osteoclast differentiation and activation. This Oryctolagus cuniculus (Rabbit) protein is Sarcoplasmic/endoplasmic reticulum calcium ATPase 2 (ATP2A2).